We begin with the raw amino-acid sequence, 326 residues long: MATH domain and coiled-coil domain-containing protein At3g58370 (326 aa).

The 127-residue stretch at aspartate 7–isoleucine 133 folds into the MATH domain. Residues leucine 259 to aspartate 312 are a coiled coil.

The chain is MATH domain and coiled-coil domain-containing protein At3g58370 from Arabidopsis thaliana (Mouse-ear cress).